A 217-amino-acid polypeptide reads, in one-letter code: MRKRISAIIMTLFMVFMSCNNGGPELKSDEVAKSDGTVLDLAKVSKKIKEASAFAASVKEVETLVKSVDELAKAIGKKIKNDGTLEFADADKDKNGSLIAGAFQIILIAEGKLKGLDKEAGISEALKAKVTDAEAKSKAFLAKVKGQTATLGKNDASDDDTKKAIKKDNSDKTKGASELEALNTAVDALLKAAEGEVEAAIKELTAPVKAEKPSQNN.

The signal sequence occupies residues 1–18; that stretch reads MRKRISAIIMTLFMVFMS. Residue C19 is the site of N-palmitoyl cysteine attachment. C19 is lipidated: S-diacylglycerol cysteine. A disordered region spans residues 151–174; sequence LGKNDASDDDTKKAIKKDNSDKTK. The span at 155-174 shows a compositional bias: basic and acidic residues; that stretch reads DASDDDTKKAIKKDNSDKTK.

This sequence belongs to the variable small protein (Vsp) family.

It is found in the cell outer membrane. The Vlp and Vsp proteins are antigenically distinct proteins, only one vlp or vsp gene is transcriptionally active at any one time. Switching between these genes is a mechanism of host immune response evasion. The polypeptide is Variable small protein 22 (Borrelia hermsii).